Reading from the N-terminus, the 200-residue chain is LexA repressor (200 aa).

Positions 27–47 form a DNA-binding region, H-T-H motif; it reads VREICNAVELRSTSTVHGHLK. Active-site for autocatalytic cleavage activity residues include S124 and K161.

Belongs to the peptidase S24 family. In terms of assembly, homodimer.

The catalysed reaction is Hydrolysis of Ala-|-Gly bond in repressor LexA.. Functionally, represses a number of genes involved in the response to DNA damage (SOS response), including recA and lexA. In the presence of single-stranded DNA, RecA interacts with LexA causing an autocatalytic cleavage which disrupts the DNA-binding part of LexA, leading to derepression of the SOS regulon and eventually DNA repair. This chain is LexA repressor, found in Clostridium tetani (strain Massachusetts / E88).